A 538-amino-acid polypeptide reads, in one-letter code: Putative outer membrane porin BglH (538 aa).

A signal peptide spans 1-25 (MFRRNIITSAILLMAPLAFSAQSLA).

It belongs to the porin LamB (TC 1.B.3) family.

It localises to the cell outer membrane. Its function is as follows. May be a sugar porin with a broad carbohydrate specificity. This Escherichia coli (strain UTI89 / UPEC) protein is Putative outer membrane porin BglH (bglH).